The sequence spans 219 residues: Protein-L-isoaspartate O-methyltransferase (219 aa).

Ser-65 is an active-site residue.

Belongs to the methyltransferase superfamily. L-isoaspartyl/D-aspartyl protein methyltransferase family. In terms of assembly, monomer.

It is found in the cytoplasm. The enzyme catalyses [protein]-L-isoaspartate + S-adenosyl-L-methionine = [protein]-L-isoaspartate alpha-methyl ester + S-adenosyl-L-homocysteine. In terms of biological role, catalyzes the methyl esterification of L-isoaspartyl residues in peptides and proteins that result from spontaneous decomposition of normal L-aspartyl and L-asparaginyl residues. It plays a role in the repair and/or degradation of damaged proteins. The chain is Protein-L-isoaspartate O-methyltransferase (pcm) from Pyrococcus furiosus (strain ATCC 43587 / DSM 3638 / JCM 8422 / Vc1).